The primary structure comprises 558 residues: Probable beta-glucosidase btgE (558 aa).

Residues 1-18 form the signal peptide; sequence MKAAILATAAALTGSALA. Disordered regions lie at residues 64–105 and 251–305; these read STPS…PETP and LPSS…QMGM. Low complexity-rich tracts occupy residues 76–105 and 252–292; these read PETTSTEEVTTTLHSTSTSTVTVTATPETP and PSSS…SSSA. Residues 293-305 are compositionally biased toward polar residues; that stretch reads EVPQTTGSGQMGM. The active-site Proton donor is Glu-399. Glu-495 acts as the Nucleophile in catalysis.

It belongs to the glycosyl hydrolase 17 family.

The protein localises to the secreted. The protein resides in the cell wall. The catalysed reaction is Hydrolysis of terminal, non-reducing beta-D-glucosyl residues with release of beta-D-glucose.. It participates in glycan metabolism; cellulose degradation. Beta-glucosidases are one of a number of cellulolytic enzymes involved in the degradation of cellulosic biomass. Catalyzes the last step releasing glucose from the inhibitory cellobiose. This chain is Probable beta-glucosidase btgE (btgE), found in Aspergillus terreus (strain NIH 2624 / FGSC A1156).